The primary structure comprises 97 residues: Putative membrane protein insertion efficiency factor (97 aa).

The tract at residues 77–97 (VPDAPASPSPSSSCSCKGPHP) is disordered. Positions 85 to 97 (SPSSSCSCKGPHP) are enriched in low complexity.

It belongs to the UPF0161 family.

The protein localises to the cell inner membrane. Could be involved in insertion of integral membrane proteins into the membrane. This Xanthomonas euvesicatoria pv. vesicatoria (strain 85-10) (Xanthomonas campestris pv. vesicatoria) protein is Putative membrane protein insertion efficiency factor.